The chain runs to 401 residues: Acetate kinase (401 aa).

Mg(2+) is bound at residue N7. Residue K14 participates in ATP binding. Position 91 (R91) interacts with substrate. D148 serves as the catalytic Proton donor/acceptor. ATP contacts are provided by residues 208-212 (HLGNG), 283-285 (DFR), and 332-336 (GVGEN). E385 contributes to the Mg(2+) binding site.

The protein belongs to the acetokinase family. In terms of assembly, homodimer. Requires Mg(2+) as cofactor. The cofactor is Mn(2+).

It localises to the cytoplasm. It carries out the reaction acetate + ATP = acetyl phosphate + ADP. Its pathway is metabolic intermediate biosynthesis; acetyl-CoA biosynthesis; acetyl-CoA from acetate: step 1/2. In terms of biological role, catalyzes the formation of acetyl phosphate from acetate and ATP. Can also catalyze the reverse reaction. The protein is Acetate kinase of Thermoanaerobacter pseudethanolicus (strain ATCC 33223 / 39E) (Clostridium thermohydrosulfuricum).